The primary structure comprises 536 residues: Fanconi anemia group E protein (536 aa).

Residues 150–371 (MEGASPLSER…VLTRSLFLGR (222 aa)) form an interaction with FANCC region. The disordered stretch occupies residues 171-252 (LGLGGRRLKS…ADGGSASPIK (82 aa)). The segment covering 230–239 (EKERPEHKSL) has biased composition (basic and acidic residues). Residue serine 249 is modified to Phosphoserine. Position 346 is a phosphothreonine; by CHEK1 (threonine 346). Phosphoserine; by CHEK1 is present on serine 374.

In terms of assembly, belongs to the multisubunit FA complex composed of FANCA, FANCB, FANCC, FANCE, FANCF, FANCG, FANCL/PHF9 and FANCM. The complex is not found in FA patients. Interacts with FANCC and FANCD2. Post-translationally, phosphorylated. Phosphorylation by CHEK1 at Thr-346 and Ser-374 regulates its function in DNA cross-links repair. In terms of processing, ubiquitinated. Phosphorylation by CHEK1 induces polyubiquitination and degradation.

The protein resides in the nucleus. As part of the Fanconi anemia (FA) complex functions in DNA cross-links repair. Required for the nuclear accumulation of FANCC and provides a critical bridge between the FA complex and FANCD2. The protein is Fanconi anemia group E protein (FANCE) of Homo sapiens (Human).